A 288-amino-acid chain; its full sequence is Light-independent protochlorophyllide reductase iron-sulfur ATP-binding protein (288 aa).

Residues Gly12 to Thr17 and Lys41 contribute to the ATP site. Ser16 is a binding site for Mg(2+). [4Fe-4S] cluster-binding residues include Cys97 and Cys131. Asn182–Arg183 lines the ATP pocket.

Belongs to the NifH/BchL/ChlL family. In terms of assembly, homodimer. Protochlorophyllide reductase is composed of three subunits; ChlL, ChlN and ChlB. It depends on [4Fe-4S] cluster as a cofactor.

It carries out the reaction chlorophyllide a + oxidized 2[4Fe-4S]-[ferredoxin] + 2 ADP + 2 phosphate = protochlorophyllide a + reduced 2[4Fe-4S]-[ferredoxin] + 2 ATP + 2 H2O. It participates in porphyrin-containing compound metabolism; chlorophyll biosynthesis (light-independent). Functionally, component of the dark-operative protochlorophyllide reductase (DPOR) that uses Mg-ATP and reduced ferredoxin to reduce ring D of protochlorophyllide (Pchlide) to form chlorophyllide a (Chlide). This reaction is light-independent. The L component serves as a unique electron donor to the NB-component of the complex, and binds Mg-ATP. This Picosynechococcus sp. (strain ATCC 27264 / PCC 7002 / PR-6) (Agmenellum quadruplicatum) protein is Light-independent protochlorophyllide reductase iron-sulfur ATP-binding protein.